The sequence spans 254 residues: Thiazole synthase (254 aa).

Lys95 functions as the Schiff-base intermediate with DXP in the catalytic mechanism. Residues Gly156, 182 to 183, and 204 to 205 contribute to the 1-deoxy-D-xylulose 5-phosphate site; these read AG and NT.

It belongs to the ThiG family. Homotetramer. Forms heterodimers with either ThiH or ThiS.

It is found in the cytoplasm. The enzyme catalyses [ThiS sulfur-carrier protein]-C-terminal-Gly-aminoethanethioate + 2-iminoacetate + 1-deoxy-D-xylulose 5-phosphate = [ThiS sulfur-carrier protein]-C-terminal Gly-Gly + 2-[(2R,5Z)-2-carboxy-4-methylthiazol-5(2H)-ylidene]ethyl phosphate + 2 H2O + H(+). It functions in the pathway cofactor biosynthesis; thiamine diphosphate biosynthesis. Functionally, catalyzes the rearrangement of 1-deoxy-D-xylulose 5-phosphate (DXP) to produce the thiazole phosphate moiety of thiamine. Sulfur is provided by the thiocarboxylate moiety of the carrier protein ThiS. In vitro, sulfur can be provided by H(2)S. The protein is Thiazole synthase of Shewanella baltica (strain OS195).